The sequence spans 277 residues: Ribonuclease HII (277 aa).

Residues 72–260 enclose the RNase H type-2 domain; sequence EYIAGIDEAG…IKEMIEMKKE (189 aa). The a divalent metal cation site is built by Asp-78, Glu-79, and Asp-170.

This sequence belongs to the RNase HII family. The cofactor is Mn(2+). It depends on Mg(2+) as a cofactor.

It is found in the cytoplasm. It catalyses the reaction Endonucleolytic cleavage to 5'-phosphomonoester.. Endonuclease that specifically degrades the RNA of RNA-DNA hybrids. The chain is Ribonuclease HII from Geobacillus sp. (strain WCH70).